A 576-amino-acid polypeptide reads, in one-letter code: 5'-nucleotidase (576 aa).

A signal peptide spans 1 to 28; sequence MRPAAATAPKWLLLALSALLPLWPTAKS. Residues Asp-38 and His-40 each coordinate Zn(2+). Cysteines 53 and 59 form a disulfide. Asn-55 is a glycosylation site (N-linked (GlcNAc...) asparagine). 4 residues coordinate Zn(2+): Asp-87, Asn-119, His-222, and His-245. N-linked (GlcNAc...) asparagine glycosylation is found at Asn-313, Asn-335, and Asn-349. 2 disulfides stabilise this stretch: Cys-355–Cys-360 and Cys-367–Cys-389. AMP is bound at residue Arg-356. Arg-356 provides a ligand contact to IMP. 2 residues coordinate AMP: Asn-392 and Arg-397. Positions 392 and 397 each coordinate IMP. N-linked (GlcNAc...) asparagine glycosylation occurs at Asn-405. Phe-419 provides a ligand contact to AMP. Phe-419 is an IMP binding site. Cys-478 and Cys-481 are joined by a disulfide. Tyr-502 and Asp-508 together coordinate AMP. IMP contacts are provided by Tyr-502 and Asp-508. Residue Ser-551 is the site of GPI-anchor amidated serine attachment. Positions 552-576 are cleaved as a propeptide — removed in mature form; sequence AASHYQGSFPLIILSFWAVILVLYQ.

This sequence belongs to the 5'-nucleotidase family. Homodimer. It depends on Zn(2+) as a cofactor. In terms of tissue distribution, expressed in the brain.

It localises to the cell membrane. The catalysed reaction is a ribonucleoside 5'-phosphate + H2O = a ribonucleoside + phosphate. It catalyses the reaction a 2'-deoxyribonucleoside 5'-phosphate + H2O = a 2'-deoxyribonucleoside + phosphate. It carries out the reaction dTMP + H2O = thymidine + phosphate. The enzyme catalyses CMP + H2O = cytidine + phosphate. The catalysed reaction is IMP + H2O = inosine + phosphate. It catalyses the reaction AMP + H2O = adenosine + phosphate. It carries out the reaction GMP + H2O = guanosine + phosphate. The enzyme catalyses UMP + H2O = uridine + phosphate. The catalysed reaction is dAMP + H2O = 2'-deoxyadenosine + phosphate. It catalyses the reaction dCMP + H2O = 2'-deoxycytidine + phosphate. In terms of biological role, catalyzes the hydrolysis of nucleotide monophosphates, releasing inorganic phosphate and the corresponding nucleoside. AMP is the preferred substrate but can also hydrolyze CMP and GMP. Shows a preference for ribonucleotide monophosphates over their equivalent deoxyribose forms. Other substrates include IMP, UMP, dAMP, dCMP, dTMP, NAD and NMN. In Rattus norvegicus (Rat), this protein is 5'-nucleotidase (Nt5e).